The sequence spans 1265 residues: Protein FAM193A (1265 aa).

Positions 107-142 (SEDTYSTLLQRYQRSEEELRRVAEEWLECQKRIDAY) form a coiled coil. The segment at 247–272 (APDYLAERSPPSVSSASSGSGSSSPI) is disordered. A compositionally biased stretch (low complexity) spans 255-271 (SPPSVSSASSGSGSSSP). At Ser-293 the chain carries Phosphoserine. Disordered regions lie at residues 331–407 (NGGG…EQAP), 553–586 (GSEI…SKEK), 626–674 (VQSS…APLP), 750–785 (ENGV…NQKE), 822–841 (LTKR…ERES), 859–881 (ETKP…KLEE), and 893–1163 (EHLH…DRVN). A compositionally biased stretch (acidic residues) spans 355–365 (EADDEEADGES). Ser-383 is modified (phosphoserine). Phosphoserine is present on Ser-642. Positions 757-769 (QQDDGDESADEDS) are enriched in acidic residues. A compositionally biased stretch (low complexity) spans 772–781 (EHSSSTSTST). The segment covering 868–877 (AAKRARHKQR) has biased composition (basic residues). The stretch at 873-932 (RHKQRKLEEKARLEAEARAREHLHLQEEQRRREEEEDEEEEEDRFKEEFQRLQELQKLRA) forms a coiled coil. Basic and acidic residues-rich tracts occupy residues 893–905 (EHLH…RRRE) and 915–929 (DRFK…ELQK). Residues 931 to 940 (RAVKKKKKER) show a composition bias toward basic residues. Positions 953–973 (RNFQAATESVPNSGNIHNGSL) are enriched in polar residues. Residues 1093–1118 (TEQKREERKVNSNNNNKKQLNHIKDE) are a coiled coil. Ser-1129 and Ser-1144 each carry phosphoserine. Over residues 1149 to 1159 (GKNKKNKKKKG) the composition is skewed to basic residues.

This sequence belongs to the FAM193 family.

This chain is Protein FAM193A (FAM193A), found in Homo sapiens (Human).